The following is a 239-amino-acid chain: Mannose-P-dolichol utilization defect 1 protein homolog 1 (239 aa).

6 helical membrane passes run C25–V45, L62–L82, F91–F111, A123–F143, L174–I194, and M202–L222. Residues L27 to E93 enclose the PQ-loop 1 domain. Residues K150–G205 enclose the PQ-loop 2 domain.

This sequence belongs to the MPDU1 (TC 2.A.43.3) family.

It is found in the membrane. In Arabidopsis thaliana (Mouse-ear cress), this protein is Mannose-P-dolichol utilization defect 1 protein homolog 1.